Here is a 204-residue protein sequence, read N- to C-terminus: Ribosome maturation factor RimP (204 aa).

The segment at 177–204 is disordered; it reads NFDESQFDEIQETEGEEADEAETPITRH. Residues 181–198 show a composition bias toward acidic residues; that stretch reads SQFDEIQETEGEEADEAE.

It belongs to the RimP family.

The protein localises to the cytoplasm. Functionally, required for maturation of 30S ribosomal subunits. This chain is Ribosome maturation factor RimP, found in Cereibacter sphaeroides (strain ATCC 17025 / ATH 2.4.3) (Rhodobacter sphaeroides).